Consider the following 433-residue polypeptide: Enolase (433 aa).

Gln166 serves as a coordination point for (2R)-2-phosphoglycerate. Glu208 functions as the Proton donor in the catalytic mechanism. Mg(2+)-binding residues include Asp245, Glu289, and Asp316. The (2R)-2-phosphoglycerate site is built by Lys341, Arg370, Ser371, and Lys392. The active-site Proton acceptor is Lys341.

It belongs to the enolase family. Mg(2+) is required as a cofactor.

It localises to the cytoplasm. The protein resides in the secreted. Its subcellular location is the cell surface. The enzyme catalyses (2R)-2-phosphoglycerate = phosphoenolpyruvate + H2O. It participates in carbohydrate degradation; glycolysis; pyruvate from D-glyceraldehyde 3-phosphate: step 4/5. In terms of biological role, catalyzes the reversible conversion of 2-phosphoglycerate (2-PG) into phosphoenolpyruvate (PEP). It is essential for the degradation of carbohydrates via glycolysis. The polypeptide is Enolase (Acetivibrio thermocellus (strain ATCC 27405 / DSM 1237 / JCM 9322 / NBRC 103400 / NCIMB 10682 / NRRL B-4536 / VPI 7372) (Clostridium thermocellum)).